We begin with the raw amino-acid sequence, 786 residues long: ATP-dependent RNA helicase SUPV3L1, mitochondrial (786 aa).

The N-terminal 22 residues, 1 to 22 (MSFSRALLWARLPAGRQAGHRA), are a transit peptide targeting the mitochondrion. N6-acetyllysine is present on Lys99. The Helicase ATP-binding domain occupies 194-334 (DARAMQRKII…AIDLVMELMY (141 aa)). 207–214 (GPTNSGKT) provides a ligand contact to ATP. Lys220 carries the N6-acetyllysine modification. Residues 353–518 (VLDHALESLD…GLHPTAEQIE (166 aa)) enclose the Helicase C-terminal domain. The interval 650-786 (PDASLIRDLQ…RRKKKEPDSD (137 aa)) is interaction with LAMTOR5, important for protein stability. 2 disordered regions span residues 690–730 (GFPS…DAGE) and 749–786 (KQLE…PDSD). The span at 693–705 (SGSQSRLSGTLKS) shows a compositional bias: polar residues. Ser725 is modified (phosphoserine). Over residues 749–771 (KQLEKEWMTQQTEHNKEKTESGT) the composition is skewed to basic and acidic residues.

This sequence belongs to the helicase family. Homodimer; in free form. Component of the mitochondrial degradosome (mtEXO) complex which is a heteropentamer containing 2 copies of SUPV3L1 and 3 copies of PNPT1. As part of mitochondrial degradosome complex, interacts with GRSF1 in a RNA-dependent manner; the interaction enhances the activity of the complex. Interacts with LAMTOR5/HBXIP, WRN and BLM. The cofactor is Mg(2+). Mn(2+) is required as a cofactor. Broadly expressed.

The protein localises to the nucleus. It localises to the mitochondrion matrix. The protein resides in the mitochondrion nucleoid. The catalysed reaction is ATP + H2O = ADP + phosphate + H(+). Helicase activity toward DNA substrate is inhibited by micromolar concentrations of 5,6-dichloro-1-(beta-D-ribofuranosyl)benzotriazole (DRBT) and 4,5,6,7-tetrabromobenzotriazole (TBBT). Helicase activity toward RNA substrate is inhibited by elevated concentrations of TBBT. Inhibited by some ring-expanded nucleoside analogs. Its function is as follows. Major helicase player in mitochondrial RNA metabolism. Component of the mitochondrial degradosome (mtEXO) complex, that degrades 3' overhang double-stranded RNA with a 3'-to-5' directionality in an ATP-dependent manner. Involved in the degradation of non-coding mitochondrial transcripts (MT-ncRNA) and tRNA-like molecules. ATPase and ATP-dependent multisubstrate helicase, able to unwind double-stranded (ds) DNA and RNA, and RNA/DNA heteroduplexes in the 5'-to-3' direction. Plays a role in the RNA surveillance system in mitochondria; regulates the stability of mature mRNAs, the removal of aberrantly formed mRNAs and the rapid degradation of non coding processing intermediates. Also implicated in recombination and chromatin maintenance pathways. May protect cells from apoptosis. Associates with mitochondrial DNA. The sequence is that of ATP-dependent RNA helicase SUPV3L1, mitochondrial (SUPV3L1) from Homo sapiens (Human).